A 35-amino-acid chain; its full sequence is uncharacterized protein (35 aa).

The helical transmembrane segment at 14–34 threads the bilayer; that stretch reads VVVLLAICGAMLLLRWAAMIW.

The protein resides in the membrane. This is an uncharacterized protein from Escherichia coli (strain K12).